An 86-amino-acid polypeptide reads, in one-letter code: Envelope glycoprotein N (86 aa).

The signal sequence occupies residues 1-29 (MTLYKIVSKPIILLAFFFTRVVFTNEVDG). Topologically, residues 30–47 (EELFYKPTCHSDTYEIIL) are virion surface. Residues 48 to 68 (KKFSSIWILVNTFILLCSFSL) form a helical membrane-spanning segment. The Intravirion segment spans residues 69 to 86 (FLKYWCFKTLAKETVKGY).

It belongs to the herpesviridae glycoprotein N family. As to quaternary structure, interacts (via N-terminus) with gM (via N-terminus). The gM-gN heterodimer forms the gCII complex.

Its subcellular location is the virion membrane. It is found in the host membrane. The protein resides in the host Golgi apparatus. It localises to the host trans-Golgi network. Envelope glycoprotein necessary for proper maturation of gM and modulation of its membrane fusion activity. Also plays a critical role in virion morphogenesis. This is Envelope glycoprotein N from Homo sapiens (Human).